The chain runs to 502 residues: ATP synthase subunit alpha (502 aa).

Position 169 to 176 (169 to 176 (GDRQTGKT)) interacts with ATP.

This sequence belongs to the ATPase alpha/beta chains family. In terms of assembly, F-type ATPases have 2 components, CF(1) - the catalytic core - and CF(0) - the membrane proton channel. CF(1) has five subunits: alpha(3), beta(3), gamma(1), delta(1), epsilon(1). CF(0) has three main subunits: a(1), b(2) and c(9-12). The alpha and beta chains form an alternating ring which encloses part of the gamma chain. CF(1) is attached to CF(0) by a central stalk formed by the gamma and epsilon chains, while a peripheral stalk is formed by the delta and b chains.

It is found in the cell inner membrane. The catalysed reaction is ATP + H2O + 4 H(+)(in) = ADP + phosphate + 5 H(+)(out). Produces ATP from ADP in the presence of a proton gradient across the membrane. The alpha chain is a regulatory subunit. This Pelobacter propionicus (strain DSM 2379 / NBRC 103807 / OttBd1) protein is ATP synthase subunit alpha.